Reading from the N-terminus, the 135-residue chain is Large ribosomal subunit protein eL32 (135 aa).

K9 participates in a covalent cross-link: Glycyl lysine isopeptide (Lys-Gly) (interchain with G-Cter in SUMO2). K50 carries the N6-succinyllysine modification. S62 bears the Phosphoserine mark.

The protein belongs to the eukaryotic ribosomal protein eL32 family. In terms of assembly, component of the large ribosomal subunit.

It localises to the cytoplasm. Functionally, component of the large ribosomal subunit. The ribosome is a large ribonucleoprotein complex responsible for the synthesis of proteins in the cell. This chain is Large ribosomal subunit protein eL32 (RPL32), found in Macaca fascicularis (Crab-eating macaque).